The primary structure comprises 267 residues: Cyclin-C (267 aa).

A Cyclin N-terminal domain is found at 48–151 (IQVLGEQLKL…LLENLDCCLI (104 aa)).

It belongs to the cyclin family. Cyclin C subfamily. As to quaternary structure, component of the Cdk8 module of the Mediator complex, composed of CycC, Cdk8, kto and skd.

Its subcellular location is the nucleus. Component of the Mediator complex, a coactivator involved in regulated gene transcription of nearly all RNA polymerase II-dependent genes. Mediator functions as a bridge to convey information from gene-specific regulatory proteins to the basal RNA polymerase II transcription machinery. Mediator is recruited to promoters by direct interactions with regulatory proteins and serves as a scaffold for the assembly of a functional preinitiation complex with RNA polymerase II and the general transcription factors. Binds to and activates cyclin-dependent kinase Cdk8 that phosphorylates the CTD (C-terminal domain) of the large subunit of RNA polymerase II (RNAp II), which may inhibit the formation of a transcription initiation complex. Required for leg and eye development and macrochaete specification or differentiation. The polypeptide is Cyclin-C (CycC) (Drosophila melanogaster (Fruit fly)).